Here is a 482-residue protein sequence, read N- to C-terminus: Butyrophilin-like protein 2 (482 aa).

Over 1–6 the chain is Cytoplasmic; sequence MVDFPG. Residues 7 to 23 form a helical; Signal-anchor for type II membrane protein membrane-spanning segment; it reads YNLSGAVASFLFILLTM. Residues 24–482 lie on the Extracellular side of the membrane; that stretch reads KQSEDFRVIG…VAVGLPRKRS (459 aa). 3 Ig-like V-type domains span residues 29–140, 142–234, and 236–355; these read FRVI…LLLK, AGLG…SVIS, and PEKL…ASLD. 3 cysteine pairs are disulfide-bonded: Cys-50/Cys-124, Cys-164/Cys-218, and Cys-267/Cys-341. An N-linked (GlcNAc...) asparagine glycan is attached at Asn-210. Asn-427 carries an N-linked (GlcNAc...) asparagine glycan.

The protein belongs to the immunoglobulin superfamily. BTN/MOG family. As to expression, expressed in brain, heart, kidney, liver, pancreas, ovary, leukocyte, small intestine, testis and thymus.

The protein resides in the membrane. Functionally, negative regulator of T-cell proliferation. This is Butyrophilin-like protein 2 from Homo sapiens (Human).